A 380-amino-acid polypeptide reads, in one-letter code: ER-phagy receptor 1 (380 aa).

In terms of domain architecture, J spans 9-74 (DCYEILQVNH…DKRKWHEKDY (66 aa)). The C2H2-type zinc-finger motif lies at 270–294 (IMCMVCNKNFRSQNQLENHENSKKH). The interval 307–337 (KHAKEAQKNAESNKQPEDAPSESPYSNKVSS) is disordered. S344 is modified (phosphoserine). The AIM signature appears at 352–355 (FTFV). The FFAT signature appears at 361-367 (EFYTASE).

In terms of assembly, interacts (via the AIM motif) with atg8. Interacts (via the FFAT motif) with the vesicle-associated membrane protein-associated protein (VAP) family proteins scs2 and scs22.

The protein resides in the endoplasmic reticulum. It localises to the preautophagosomal structure. In terms of biological role, reticulophagy receptor required for autophagosomal sequestration of endoplasmic reticulum (ER) membranes during ER stress. Confers resistance to ER stress by promoting the autophagic degradation of the ER (ER-phagy or reticulophagy). Acts as a bridging molecule to mediate the association between atg8 on the autophagic membrane and the vesicle-associated membrane protein-associated proteins (VAPs) scs2 and scs22 on the ER. May play a role in meiosis. The protein is ER-phagy receptor 1 of Schizosaccharomyces pombe (strain 972 / ATCC 24843) (Fission yeast).